Consider the following 540-residue polypeptide: Cytochrome P450 monooxygenase prx8 (540 aa).

A helical transmembrane segment spans residues 50-68 (ALGAAIALFACACAYALVA). An N-linked (GlcNAc...) asparagine glycan is attached at N460. C483 contributes to the heme binding site.

The protein belongs to the cytochrome P450 family. It depends on heme as a cofactor.

It localises to the membrane. The protein operates within sesquiterpene biosynthesis. Functionally, cytochrome P450 monooxygenase; part of the gene cluster that mediates the biosynthesis of PR-toxin, a bicyclic sesquiterpene belonging to the eremophilane class and acting as a mycotoxin. The first step of the pathway is catalyzed by the aristolochene synthase which performs the cyclization of trans,trans-farnesyl diphosphate (FPP) to the bicyclic sesquiterpene aristolochene. Following the formation of aristolochene, the non-oxygenated aristolochene is converted to the trioxygenated intermediate eremofortin B, via 7-epi-neopetasone. This conversion appears to involve three enzymes, a hydroxysterol oxidase-like enzyme, the quinone-oxidase prx3 that forms the quinone-type-structure in the bicyclic nucleus of aristolochene with the C8-oxo group and the C-3 hydroxyl group, and the P450 monooxygenase prx9 that introduces the epoxide at the double bond between carbons 1 and 2. No monoxy or dioxy-intermediates have been reported to be released to the broth, so these three early oxidative reactions may be coupled together. Eremofortin B is further oxidized by another P450 monooxygenase, that introduces a second epoxide between carbons 7 and 11 prior to acetylation to eremofortin A by the acetyltransferase prx11. The second epoxidation may be performed by a second P450 monooxygenase. After the acetylation step, eremofortin A is converted to eremofortin C and then to PR-toxin. First the conversion of eremofortin A to eremofortin C proceeds by oxidation of the side chain of the molecule at C-12 and is catalyzed by the short-chain oxidoreductase prx1. The cytochrome P450 monooxygenase prx8 also plays a role in this step. The primary alcohol formed at C-12 is finally oxidized by the short-chain alcohol dehydrogenase prx4 that forms PR-toxin. The chain is Cytochrome P450 monooxygenase prx8 from Penicillium rubens (strain ATCC 28089 / DSM 1075 / NRRL 1951 / Wisconsin 54-1255) (Penicillium chrysogenum).